Reading from the N-terminus, the 504-residue chain is Topoisomerase I damage affected protein 11 (504 aa).

Residues 32–62 are disordered; it reads RKTGRKIRSASSNGYRLEHHRTSSAGSMHSQ. A coiled-coil region spans residues 179-231; that stretch reads ALLQSLATKELELLECKQKIEDLKKQTQHEEQNYTRRARELHELKEQVSKHLD. Thr-236 is subject to Phosphothreonine. Phosphoserine is present on residues Ser-244 and Ser-286. 3 disordered regions span residues 252–306, 332–377, and 400–504; these read LESR…SKQS, WDDS…SVSR, and DVIT…MTDF. Over residues 257 to 287 the composition is skewed to polar residues; that stretch reads ENAGNSSLPSSVSKPKNMGHQSTNQSRSVSP. Over residues 290-301 the composition is skewed to basic and acidic residues; that stretch reads IQERRQRDDSSD. 2 stretches are compositionally biased toward polar residues: residues 332-359 and 368-377; these read WDDS…QQYD and KSPSQGSVSR. A compositionally biased stretch (basic and acidic residues) spans 403 to 421; that stretch reads TDNRCDPVYKSDRQHEQKK. The span at 470-479 shows a compositional bias: basic residues; that stretch reads TREKKSKRSS. Positions 491-504 are enriched in polar residues; sequence DNSSVKNSVEMTDF.

Belongs to the TDA11 family.

Its subcellular location is the cytoplasm. This is Topoisomerase I damage affected protein 11 (TDA11) from Saccharomyces cerevisiae (strain ATCC 204508 / S288c) (Baker's yeast).